We begin with the raw amino-acid sequence, 433 residues long: Homogentisate 1,2-dioxygenase (433 aa).

The Proton acceptor role is filled by His-288. Fe cation-binding residues include His-331 and Glu-337. Residues Tyr-346 and His-367 each contribute to the homogentisate site. Residue His-367 participates in Fe cation binding.

The protein belongs to the homogentisate dioxygenase family. In terms of assembly, hexamer; dimer of trimers. Requires Fe cation as cofactor.

The enzyme catalyses homogentisate + O2 = 4-maleylacetoacetate + H(+). It participates in amino-acid degradation; L-phenylalanine degradation; acetoacetate and fumarate from L-phenylalanine: step 4/6. Its function is as follows. Involved in the catabolism of homogentisate (2,5-dihydroxyphenylacetate or 2,5-OH-PhAc), a central intermediate in the degradation of phenylalanine and tyrosine. Catalyzes the oxidative ring cleavage of the aromatic ring of homogentisate to yield maleylacetoacetate. This chain is Homogentisate 1,2-dioxygenase, found in Pseudomonas putida (strain ATCC 700007 / DSM 6899 / JCM 31910 / BCRC 17059 / LMG 24140 / F1).